We begin with the raw amino-acid sequence, 318 residues long: Acetyl-coenzyme A carboxylase carboxyl transferase subunit alpha (318 aa).

Positions 39–293 constitute a CoA carboxyltransferase C-terminal domain; that stretch reads KLEKKVDKMR…HEALARHLKE (255 aa).

It belongs to the AccA family. In terms of assembly, acetyl-CoA carboxylase is a heterohexamer composed of biotin carboxyl carrier protein (AccB), biotin carboxylase (AccC) and two subunits each of ACCase subunit alpha (AccA) and ACCase subunit beta (AccD).

It is found in the cytoplasm. It carries out the reaction N(6)-carboxybiotinyl-L-lysyl-[protein] + acetyl-CoA = N(6)-biotinyl-L-lysyl-[protein] + malonyl-CoA. Its pathway is lipid metabolism; malonyl-CoA biosynthesis; malonyl-CoA from acetyl-CoA: step 1/1. In terms of biological role, component of the acetyl coenzyme A carboxylase (ACC) complex. First, biotin carboxylase catalyzes the carboxylation of biotin on its carrier protein (BCCP) and then the CO(2) group is transferred by the carboxyltransferase to acetyl-CoA to form malonyl-CoA. The chain is Acetyl-coenzyme A carboxylase carboxyl transferase subunit alpha from Geobacter metallireducens (strain ATCC 53774 / DSM 7210 / GS-15).